Reading from the N-terminus, the 317-residue chain is Methionyl-tRNA formyltransferase (317 aa).

110–113 (SLLP) provides a ligand contact to (6S)-5,6,7,8-tetrahydrofolate. The interval 292 to 317 (RMKGEDFVRGKNVQPGDVLGEANEEN) is disordered.

It belongs to the Fmt family.

The catalysed reaction is L-methionyl-tRNA(fMet) + (6R)-10-formyltetrahydrofolate = N-formyl-L-methionyl-tRNA(fMet) + (6S)-5,6,7,8-tetrahydrofolate + H(+). In terms of biological role, attaches a formyl group to the free amino group of methionyl-tRNA(fMet). The formyl group appears to play a dual role in the initiator identity of N-formylmethionyl-tRNA by promoting its recognition by IF2 and preventing the misappropriation of this tRNA by the elongation apparatus. The protein is Methionyl-tRNA formyltransferase of Bacillus velezensis (strain DSM 23117 / BGSC 10A6 / LMG 26770 / FZB42) (Bacillus amyloliquefaciens subsp. plantarum).